The chain runs to 360 residues: Protein Wnt-2 (360 aa).

The signal sequence occupies residues 1-26; the sequence is MNAPLGGIWLWLPLLLTWLTPEVSSS. 11 cysteine pairs are disulfide-bonded: cysteine 76–cysteine 87, cysteine 127–cysteine 135, cysteine 137–cysteine 157, cysteine 206–cysteine 220, cysteine 208–cysteine 215, cysteine 278–cysteine 309, cysteine 294–cysteine 304, cysteine 308–cysteine 348, cysteine 324–cysteine 339, cysteine 326–cysteine 336, and cysteine 331–cysteine 332. The O-palmitoleoyl serine; by PORCN moiety is linked to residue serine 212. Asparagine 295 carries N-linked (GlcNAc...) asparagine glycosylation.

This sequence belongs to the Wnt family. In terms of processing, palmitoleoylation is required for efficient binding to frizzled receptors. Depalmitoleoylation leads to Wnt signaling pathway inhibition.

It is found in the secreted. Its subcellular location is the extracellular space. It localises to the extracellular matrix. Ligand for members of the frizzled family of seven transmembrane receptors. Probable developmental protein. May be a signaling molecule which affects the development of discrete regions of tissues. Is likely to signal over only few cell diameters. The polypeptide is Protein Wnt-2 (WNT2) (Eulemur macaco macaco (Black lemur)).